The chain runs to 406 residues: Odorant receptor 10a (406 aa).

Topologically, residues 1–45 are cytoplasmic; sequence MSEWLRFLKRDQQLDVYFFAVPRLSLDIMGYWPGKTGDTWPWRSL. The chain crosses the membrane as a helical span at residues 46 to 66; it reads IHFAILAIGVATELHAGMCFL. Topologically, residues 67-74 are extracellular; that stretch reads DRQQITLA. The helical transmembrane segment at 75–95 threads the bilayer; the sequence is LETLCPAGTSAVTLLKMFLML. The Cytoplasmic segment spans residues 96 to 143; that stretch reads RFRQDLSIMWNRLRGLLFDPNWERPEQRDIRLKHSAMAARINFWPLSA. A helical membrane pass occupies residues 144 to 164; sequence GFFTCTTYNLKPILIAMILYL. The Extracellular segment spans residues 165 to 189; sequence QNRYEDFVWFTPFNMTMPKVLLNYP. N-linked (GlcNAc...) asparagine glycosylation occurs at Asn-178. Residues 190 to 210 traverse the membrane as a helical segment; it reads FFPLTYIFIAYTGYVTIFMFG. Residues 211–281 lie on the Cytoplasmic side of the membrane; sequence GCDGFYFEFC…LTRFFRDRYT (71 aa). A helical membrane pass occupies residues 282-302; that stretch reads IITLAHFVSAAMVIGFSMVNL. The Extracellular portion of the chain corresponds to 303 to 308; that stretch reads LTLGNN. A helical membrane pass occupies residues 309–329; it reads GLGAMLYVAYTVAALSQLLVY. The Cytoplasmic portion of the chain corresponds to 330–372; sequence CYGGTLVAESSTGLCRAMFSCPWQLFKPKQRRLVQLLILRSQR. The chain crosses the membrane as a helical span at residues 373-393; sequence PVSMAVPFFSPSLATFAAILQ. The Extracellular segment spans residues 394-406; sequence TSGSIIALVKSFQ.

The protein belongs to the insect chemoreceptor superfamily. Heteromeric odorant receptor channel (TC 1.A.69) family. Or1a subfamily. In terms of assembly, interacts with Orco. Complexes exist early in the endomembrane system in olfactory sensory neurons (OSNs), coupling these complexes to the conserved ciliary trafficking pathway. In terms of tissue distribution, expressed in olfactory sensory neurons in the antenna.

The protein resides in the cell membrane. Functionally, odorant receptor which mediates acceptance or avoidance behavior, depending on its substrates. The odorant receptor repertoire encodes a large collection of odor stimuli that vary widely in identity, intensity, and duration. May form a complex with Orco to form odorant-sensing units, providing sensitive and prolonged odorant signaling and calcium permeability. Involved in the behavioral responses to esters, and specifically to ethyl hexanoate, benzaldehyde, and acetophenone. The polypeptide is Odorant receptor 10a (Or10a) (Drosophila melanogaster (Fruit fly)).